Consider the following 300-residue polypeptide: Hemagglutinin 1 (300 aa).

The chain crosses the membrane as a helical span at residues 200–221 (FIFATVVFIFLQAGRVPEIIAD).

It localises to the cell membrane. In terms of biological role, induces agglutination of neuraminidase-treated erythrocytes. This Eikenella corrodens protein is Hemagglutinin 1 (hag1).